The primary structure comprises 196 residues: 3-isopropylmalate dehydratase small subunit (196 aa).

This sequence belongs to the LeuD family. LeuD type 1 subfamily. In terms of assembly, heterodimer of LeuC and LeuD.

The catalysed reaction is (2R,3S)-3-isopropylmalate = (2S)-2-isopropylmalate. The protein operates within amino-acid biosynthesis; L-leucine biosynthesis; L-leucine from 3-methyl-2-oxobutanoate: step 2/4. Its function is as follows. Catalyzes the isomerization between 2-isopropylmalate and 3-isopropylmalate, via the formation of 2-isopropylmaleate. The protein is 3-isopropylmalate dehydratase small subunit of Streptococcus gordonii (strain Challis / ATCC 35105 / BCRC 15272 / CH1 / DL1 / V288).